The following is a 301-amino-acid chain: Aldose reductase (301 aa).

Position 11-20 (glycine 11–glycine 20) interacts with NADP(+). Tyrosine 51 (proton donor) is an active-site residue. Histidine 111 is a binding site for substrate. Position 209-266 (serine 209–asparagine 266) interacts with NADP(+).

It belongs to the aldo/keto reductase family.

It localises to the cytoplasm. The catalysed reaction is an alditol + NAD(+) = an aldose + NADH + H(+). It catalyses the reaction an alditol + NADP(+) = an aldose + NADPH + H(+). Functionally, catalyzes the NADPH-dependent reduction of a wide variety of carbonyl-containing compounds to their corresponding alcohols with a broad range of catalytic efficiencies. This is Aldose reductase from Encephalitozoon cuniculi (strain GB-M1) (Microsporidian parasite).